The chain runs to 624 residues: MSDNQSWNSSGSEEDPETESGPPVERCGVLSKWTNYIHGWQDRWVVLKNNALSYYKSEDETEYGCRGSICLSKAVITPHDFDECRFDISVNDSVWYLRAQDPDHRQQWIDAIEQHKTESGYGSESSLRRHGSMVSLVSGASGYSATSTSSFKKGHSLREKLAEMETFRDILCRQVDTLQKYFDACADAVSKDELQRDKVVEDDEDDFPTTRSDGDFLHSTNGNKEKLFPRVTPKGINGIDFKGEAITFKATTVGIPATLSHCIELMVKREDSWQKRLDKETEKKRRTEEAYKNAMTELKKKSHFGGPDYEEGPNSLINEEEFFDAVEAALDRQDEIEEQSQSEKVRLHWPTSLPSGDAFSSVGTHRFVQKPYSRSSSVSSIDLVSASDDVHRFSSQVEEMVQNHMTYSLQDVGGDANWQLVVEEGEMKVYRREVEENGIVLDPLKATRAVKGVTGHEVCNYFWNVDVRNDWETTIENFHVVETLADNAIIIYQTHKRVWPASQRDVLYLSVIRKIPALTENDPETWIVCNFSVDHDSAPLNNRCVRAKINVAMICQTLVSPPEGNQEISRDNILCKITYVANVNPGGWAPASVLRAVAKREYPKFLKRFTSYVQEKTAGKPILF.

Residues 1-11 (MSDNQSWNSSG) show a composition bias toward polar residues. Residues 1 to 24 (MSDNQSWNSSGSEEDPETESGPPV) form a disordered region. Positions 23-117 (PVERCGVLSK…WIDAIEQHKT (95 aa)) constitute a PH domain. Phosphoserine is present on Ser126. The residue at position 132 (Ser132) is a Phosphoserine; by PKD. Ser135 carries the post-translational modification Phosphoserine. Positions 263-303 (IELMVKREDSWQKRLDKETEKKRRTEEAYKNAMTELKKKSH) form a coiled coil. Ser315 is modified (phosphoserine). The short motif at 321–327 (EFFDAVE) is the FFAT element. Tyr372 carries the post-translational modification Phosphotyrosine. Residues Ser373, Ser377, and Ser380 each carry the phosphoserine modification. Residues 389–618 (DVHRFSSQVE…FTSYVQEKTA (230 aa)) enclose the START domain. 4 residues coordinate an N-acylsphing-4-enine: Glu472, Gln493, Asn530, and Tyr579.

As to quaternary structure, interacts with VAPA and VAPB. Interaction with VAPB is less efficient than with VAPA. Interacts (via FFAT motif) with the MOSPD2 (via MSP domain). Post-translationally, phosphorylation on Ser-132 decreases the affinity toward phosphatidylinositol 4-phosphate at Golgi membranes and reduces ceramide transfer activity. Inactivated by hyperphosphorylation of serine residues by CSNK1G2/CK1 that triggers dissociation from the Golgi complex, thus down-regulating ER-to-Golgi transport of ceramide and sphingomyelin synthesis.

It is found in the cytoplasm. It localises to the golgi apparatus. Its subcellular location is the endoplasmic reticulum. The enzyme catalyses N-hexadecanoylsphing-4-enine(in) = N-hexadecanoylsphing-4-enine(out). Functionally, shelters ceramides and diacylglycerol lipids inside its START domain and mediates the intracellular trafficking of ceramides and diacylglycerol lipids in a non-vesicular manner. The polypeptide is Ceramide transfer protein (CERT1) (Pongo abelii (Sumatran orangutan)).